The sequence spans 62 residues: uncharacterized protein (62 aa).

This is an uncharacterized protein from Schizosaccharomyces pombe (strain 972 / ATCC 24843) (Fission yeast).